We begin with the raw amino-acid sequence, 201 residues long: Large ribosomal subunit protein uL4 (201 aa).

The interval 44–68 (KAQKTRSEVAGTTKKSKKQKGGGAR) is disordered.

It belongs to the universal ribosomal protein uL4 family. Part of the 50S ribosomal subunit.

Its function is as follows. One of the primary rRNA binding proteins, this protein initially binds near the 5'-end of the 23S rRNA. It is important during the early stages of 50S assembly. It makes multiple contacts with different domains of the 23S rRNA in the assembled 50S subunit and ribosome. Functionally, forms part of the polypeptide exit tunnel. The chain is Large ribosomal subunit protein uL4 from Xanthomonas campestris pv. campestris (strain 8004).